The primary structure comprises 1306 residues: Disease resistance protein Roq1 (1306 aa).

The TIR domain maps to 10–179 (RSYDVFLSFR…QILKDIFDKF (170 aa)). NAD(+)-binding positions include 19–24 (RGEDTR) and glycine 52. Residue glutamate 86 is part of the active site. Residues 198 to 417 (KKLSSLLRMD…IDRLKDNPEG (220 aa)) form the NB-ARC domain. 18 LRR repeats span residues 200-224 (LSSLLRMDLKGVRLVGIWGMGGVGK), 252-275 (LQHHTLLYLQKTLLSKLLKVEFVD), 417-440 (GEIMATLKISFDGLRDYEKSIFLD), 599-622 (PSKLVYLTMKGSSIIELWNGAKRL), 645-669 (ITNLERLILSSCDALVEVHPSVGFL), 670-693 (KNLILLNMDHCISLERLPAIIQSE), 716-739 (MTHLKKLDLTSTGIRELPASIEHL), 741-763 (SLENLQMHSCNQLVSLPSSIWRF), 784-807 (SNCTRELILKLVSIKELPTSIGNL), 808-831 (TSLNFLEICNCKTISSLSSSIWGL), 832-857 (TSLTTLKLLDCRKLKNLPGIPNAINH), 878-902 (LDLLRIIDMSWCSCISSLPHNIWML), 904-926 (FLRILCISYCSRLEYLPENLGHL), 927-949 (EHLEELLADGTGILRLPSSVARL), 961-983 (FAIGPKVQYSSSMLNLPDDVFGS), 987-1010 (LGSVVKLNLSGNGFCNLPETMNQL), 1013-1036 (LEYLDITFCQRLEALPELPPSIKE), and 1045-1070 (LRIMEDLVIKCKELNLIAVTKIEYQN).

The protein belongs to the disease resistance TIR-NB-LRR family. As to quaternary structure, homodimer.

It carries out the reaction NAD(+) + H2O = ADP-D-ribose + nicotinamide + H(+). The catalysed reaction is NAD(+) = 2'cADPR + nicotinamide + H(+). Functionally, disease resistance (R) protein that specifically recognizes the Xanthomonas and Pseudomonas effector proteins XopQ and HopQ1, and triggers cell death. An NAD(+) hydrolase (NADase): in response to activation, catalyzes cleavage of NAD(+) into ADP-D-ribose (ADPR) and nicotinamide; NAD(+) cleavage triggers a defense system that promotes cell death. Makes small amounts of 2' cyclic ADPR (2'cADPR). The sequence is that of Disease resistance protein Roq1 from Nicotiana benthamiana.